Consider the following 132-residue polypeptide: Small ribosomal subunit protein uS8 (132 aa).

The protein belongs to the universal ribosomal protein uS8 family. In terms of assembly, part of the 30S ribosomal subunit. Contacts proteins S5 and S12.

Functionally, one of the primary rRNA binding proteins, it binds directly to 16S rRNA central domain where it helps coordinate assembly of the platform of the 30S subunit. The sequence is that of Small ribosomal subunit protein uS8 from Anaeromyxobacter sp. (strain Fw109-5).